The chain runs to 660 residues: UPF0603 protein MT2410 (660 aa).

The signal sequence occupies residues 1–26 (MRLVRLLGMVLTILAAGLLLGPPAGA). The chain crosses the membrane as a helical span at residues 162–182 (VVLLVTVGIIVIVVAVLLVVM). The stretch at 488–567 (DQLTKVDADL…LEAAHDRKSS (80 aa)) forms a coiled coil. The chain crosses the membrane as a helical span at residues 605 to 625 (GGNNAGAILGGIIIGDLLSGG). Residues 638–660 (FGGSSNAPGSSPDGGFLGGGGRF) are disordered.

This sequence belongs to the UPF0603 family.

The protein resides in the cell membrane. Functionally, may play a role in septum formation. This chain is UPF0603 protein MT2410, found in Mycobacterium tuberculosis (strain CDC 1551 / Oshkosh).